An 83-amino-acid polypeptide reads, in one-letter code: Small ribosomal subunit protein bS16 (83 aa).

It belongs to the bacterial ribosomal protein bS16 family.

This chain is Small ribosomal subunit protein bS16, found in Pseudomonas fluorescens (strain Pf0-1).